A 60-amino-acid chain; its full sequence is Large ribosomal subunit protein bL32 (60 aa).

It belongs to the bacterial ribosomal protein bL32 family.

This chain is Large ribosomal subunit protein bL32, found in Ruminiclostridium cellulolyticum (strain ATCC 35319 / DSM 5812 / JCM 6584 / H10) (Clostridium cellulolyticum).